We begin with the raw amino-acid sequence, 293 residues long: Undecaprenyl-diphosphatase (293 aa).

The next 8 helical transmembrane spans lie at 3–23 (IALALKAVILGIVEGLTEFLP), 43–63 (KGKIFEIVIQFGAILAVCWEF), 85–105 (VNVIVATIPAIVLALVFGKWI), 109–129 (LFNPITVATAFIIGGVVILLA), 178–198 (FALVPGTSRSGATIIGGMLFG), 203–223 (VATEFSFFLAIPVIFGATVYE), 238–258 (IFAVGFVFAFLSAFLCVRWLL), and 269–289 (FAWYRIAFGIIVLLTAWTGVI).

This sequence belongs to the UppP family.

Its subcellular location is the cell inner membrane. The enzyme catalyses di-trans,octa-cis-undecaprenyl diphosphate + H2O = di-trans,octa-cis-undecaprenyl phosphate + phosphate + H(+). In terms of biological role, catalyzes the dephosphorylation of undecaprenyl diphosphate (UPP). Confers resistance to bacitracin. This Cupriavidus metallidurans (strain ATCC 43123 / DSM 2839 / NBRC 102507 / CH34) (Ralstonia metallidurans) protein is Undecaprenyl-diphosphatase.